Here is a 600-residue protein sequence, read N- to C-terminus: Na(+)/dicarboxylate cotransporter 3 (600 aa).

At 1-16 (MAALAALAKKVWSARR) the chain is on the cytoplasmic side. A helical membrane pass occupies residues 17 to 37 (LLVLLLVPLALLPILFALPPK). At 38-55 (EGRCLYVILLMAVYWCTE) the chain is on the extracellular side. The helical transmembrane segment at 56–76 (ALPLSVTALLPIILFPFMGIL) threads the bilayer. The Cytoplasmic portion of the chain corresponds to 77–82 (PSSKVC). A helical membrane pass occupies residues 83–103 (PQYFLDTNFLFLSGLIMASAI). At 104–137 (EERNLHRRIALKVLMLVGVQPARLILGMMVTTSF) the chain is on the extracellular side. The helical transmembrane segment at 138-158 (LSMWLSNTASTAMMLPIASAI) threads the bilayer. The Cytoplasmic portion of the chain corresponds to 159–229 (LKSLFGQRDT…KEEEHRRNIW (71 aa)). Residues 230–250 (KGFLISIPYSASIGGTATLTG) traverse the membrane as a helical segment. Residues 251–278 (TAPNLILLGQLKSFFPQCDVVNFGSWFI) are Extracellular-facing. A helical membrane pass occupies residues 279 to 299 (FAFPLMLLFLLVGWLWISFLY). Residues 300-336 (GGMSWRGWRKKNSKLQDVAEDKAKAVIQEEFQNLGPI) are Cytoplasmic-facing. A helical transmembrane segment spans residues 337-357 (KFAEQAVFILFCLFAILLFSR). Residues 358 to 372 (DPKFIPGWASLFAPG) lie on the Extracellular side of the membrane. Residues 373–393 (FVSDAVTGVAIVTILFFFPSQ) traverse the membrane as a helical segment. Over 394 to 422 (KPSLKWWFDFKAPNSETEPLLSWKKAQET) the chain is Cytoplasmic. The segment at residues 423–443 (VPWNIILLLGGGFAMAKGCEE) is an intramembrane region (helical). Residues 444–461 (SGLSAWIGGQLHPLEHVP) lie on the Cytoplasmic side of the membrane. The chain crosses the membrane as a helical span at residues 462-482 (PLLAVLLITVVIAFFTEFASN). The Extracellular segment spans residues 483-505 (TATIIIFLPVLAELAIRLHVHPL). A helical transmembrane segment spans residues 506–526 (YLMIPGTVSCSYAFMLPVSTP). Residues 527 to 546 (PNSIAFSTGHLLVKDMVRTG) are Cytoplasmic-facing. Residues 547–567 (LLMNLMGVLLLSLAMNTWAQA) traverse the membrane as a helical segment. Residues 568 to 600 (IFQLGTFPDWANTHAANVTALPPALTNNTVQTL) are Extracellular-facing. 2 N-linked (GlcNAc...) asparagine glycosylation sites follow: Asn-584 and Asn-594.

This sequence belongs to the SLC13A/DASS transporter (TC 2.A.47) family. NADC subfamily. As to expression, highly expressed in proximal parts of straight tubules in the kidney. Detected in placenta, in brain, and in liver. Strongly expressed within the meningeal layers of supporting tissue that surround the brain and relatively weakly expressed throughout the cerebral cortex, hippocampus, and cerebellum.

The protein localises to the cell membrane. It catalyses the reaction succinate(out) + 3 Na(+)(out) = succinate(in) + 3 Na(+)(in). The enzyme catalyses 2-oxoglutarate(out) + 3 Na(+)(out) = 2-oxoglutarate(in) + 3 Na(+)(in). The catalysed reaction is N-acetyl-L-aspartate(out) + 3 Na(+)(out) = N-acetyl-L-aspartate(in) + 3 Na(+)(in). It carries out the reaction glutarate(out) + 3 Na(+)(out) = glutarate(in) + 3 Na(+)(in). It catalyses the reaction fumarate(out) + 3 Na(+)(out) = fumarate(in) + 3 Na(+)(in). The enzyme catalyses malate(out) + 3 Na(+)(out) = malate(in) + 3 Na(+)(in). The catalysed reaction is 2,2-dimethylsuccinate(out) + 3 Na(+)(out) = 2,2-dimethylsuccinate(in) + 3 Na(+)(in). It carries out the reaction 2,3-dimethylsuccinate(out) + 3 Na(+)(out) = 2,3-dimethylsuccinate(in) + 3 Na(+)(in). It catalyses the reaction itaconate(out) + 3 Na(+)(out) = itaconate(in) + 3 Na(+)(in). Its activity is regulated as follows. Li(+) decreases succinate transport in the presence of Na(+). High-affinity sodium-dicarboxylate cotransporter that accepts a range of substrates with 4-6 carbon atoms, such as the citric acid cycle intermediates succinate and alpha-ketoglutarate (2-oxoglutarate), as well as other compounds including N-acetyl-L-aspartate. Transports the dicarboxylate into the cell with a probable stoichiometry of 3 Na(+) for 1 divalent dicarboxylate, rendering the process electrogenic. Can transport citrate in a Na(+)-dependent manner, recognizing the divalent form of citrate rather than the trivalent form which is normally found in blood. Imports itaconate in hepatocytes leading to activation of TFEB-dependent lysosomal biogenesis involved in antibacterial innate immune response. The chain is Na(+)/dicarboxylate cotransporter 3 (Slc13a3) from Rattus norvegicus (Rat).